We begin with the raw amino-acid sequence, 759 residues long: uncharacterized protein (759 aa).

Low complexity-rich tracts occupy residues 1-36, 142-211, and 221-347; these read MSSN…NETN, QQQN…NQHH, and NHSN…GSSS. Disordered regions lie at residues 1 to 47, 142 to 380, 409 to 428, 463 to 504, and 654 to 759; these read MSSN…AQTP, QQQN…PSIG, NNNC…GLGY, IING…NFEN, and LVDD…YLNK. A compositionally biased stretch (polar residues) spans 348-360; it reads PFQDQARSPSSSF. Low complexity-rich tracts occupy residues 463-495 and 660-747; these read IING…GNNN and HISN…DNNN.

This is an uncharacterized protein from Dictyostelium discoideum (Social amoeba).